The following is a 443-amino-acid chain: Ribulose bisphosphate carboxylase large chain (443 aa).

2 residues coordinate substrate: Asn89 and Thr139. Lys141 functions as the Proton acceptor in the catalytic mechanism. Lys143 contributes to the substrate binding site. The Mg(2+) site is built by Lys167, Asp169, and Glu170. Lys167 carries the N6-carboxylysine modification. The active-site Proton acceptor is His260. Substrate is bound by residues Arg261, His293, and Ser345.

Belongs to the RuBisCO large chain family. Type I subfamily. As to quaternary structure, heterohexadecamer of 8 large chains and 8 small chains; disulfide-linked. The disulfide link is formed within the large subunit homodimers. The cofactor is Mg(2+). Post-translationally, the disulfide bond which can form in the large chain dimeric partners within the hexadecamer appears to be associated with oxidative stress and protein turnover.

The protein resides in the plastid. The protein localises to the chloroplast. The enzyme catalyses 2 (2R)-3-phosphoglycerate + 2 H(+) = D-ribulose 1,5-bisphosphate + CO2 + H2O. It carries out the reaction D-ribulose 1,5-bisphosphate + O2 = 2-phosphoglycolate + (2R)-3-phosphoglycerate + 2 H(+). Functionally, ruBisCO catalyzes two reactions: the carboxylation of D-ribulose 1,5-bisphosphate, the primary event in carbon dioxide fixation, as well as the oxidative fragmentation of the pentose substrate in the photorespiration process. Both reactions occur simultaneously and in competition at the same active site. The polypeptide is Ribulose bisphosphate carboxylase large chain (Callitriche heterophylla (Large water-starwort)).